We begin with the raw amino-acid sequence, 666 residues long: Transketolase (666 aa).

Position 28 (histidine 28) interacts with substrate. Thiamine diphosphate contacts are provided by residues histidine 68 and 116-118 (GPL). Aspartate 157 serves as a coordination point for Mg(2+). Thiamine diphosphate is bound by residues glycine 158 and asparagine 187. Residues asparagine 187 and isoleucine 189 each coordinate Mg(2+). Substrate contacts are provided by histidine 262, arginine 356, and serine 383. Histidine 262 is a binding site for thiamine diphosphate. Glutamate 410 functions as the Proton donor in the catalytic mechanism. Phenylalanine 436 serves as a coordination point for thiamine diphosphate. 3 residues coordinate substrate: histidine 460, aspartate 468, and arginine 519.

This sequence belongs to the transketolase family. As to quaternary structure, homodimer. Mg(2+) is required as a cofactor. The cofactor is Ca(2+). Requires Mn(2+) as cofactor. It depends on Co(2+) as a cofactor. Thiamine diphosphate serves as cofactor.

It catalyses the reaction D-sedoheptulose 7-phosphate + D-glyceraldehyde 3-phosphate = aldehydo-D-ribose 5-phosphate + D-xylulose 5-phosphate. Functionally, catalyzes the transfer of a two-carbon ketol group from a ketose donor to an aldose acceptor, via a covalent intermediate with the cofactor thiamine pyrophosphate. This Halalkalibacterium halodurans (strain ATCC BAA-125 / DSM 18197 / FERM 7344 / JCM 9153 / C-125) (Bacillus halodurans) protein is Transketolase (tkt).